Reading from the N-terminus, the 466-residue chain is F-box only protein 15 (466 aa).

Residues 27-73 enclose the F-box domain; that stretch reads SASLDSLPSEVLLKILSYLDAAALLCAGCVNRRFYHLANDNFIWIRI.

As to quaternary structure, directly interacts with SKP1 and CUL1.

In terms of biological role, substrate-recognition component of the SCF (SKP1-CUL1-F-box protein)-type E3 ubiquitin ligase complex. This Bos taurus (Bovine) protein is F-box only protein 15 (FBXO15).